We begin with the raw amino-acid sequence, 265 residues long: O-methyltransferase NEC2 (265 aa).

The protein belongs to the methyltransferase superfamily.

The catalysed reaction is desmethylnectriapyrone + S-adenosyl-L-methionine = nectriapyrone + S-adenosyl-L-homocysteine + H(+). Functionally, O-methyltransferase; part of the gene cluster that mediates the biosynthesis of nectriapyrone and its analogs phomopyrone A, acropyrone and zaepyrone. The nectriapyrone biosynthetic gene cluster consists of two genes, the highly reducing polyketide synthase NEC1 that produces a demethylated analog of nectriapyrone from one unit of acetyl-CoA and one unit of malonyl-CoA; and the O-methyltransferase NEC2 that further methylates the NEC1 product to yield nectriapyrone. Nectriapyrone is further hydrolyzed to nectriapyrone D, also known as gulypyrone B, by an unidentified hydrolase localized outside the nectriapyrone cluster. In Pyricularia oryzae (strain 70-15 / ATCC MYA-4617 / FGSC 8958) (Rice blast fungus), this protein is O-methyltransferase NEC2.